Reading from the N-terminus, the 331-residue chain is Ketol-acid reductoisomerase (NADP(+)) (331 aa).

One can recognise a KARI N-terminal Rossmann domain in the interval 2-182 (AKLFYDSDAD…GGTRAGILET (181 aa)). Residues 25–28 (YGSQ), S51, S53, and 83–86 (DEFQ) each bind NADP(+). H108 is an active-site residue. NADP(+) is bound at residue G134. The KARI C-terminal knotted domain occupies 183-328 (NFKEETETDL…KTLRSMFSWL (146 aa)). Positions 191, 195, 227, and 231 each coordinate Mg(2+). S252 contacts substrate.

Belongs to the ketol-acid reductoisomerase family. Mg(2+) serves as cofactor.

It catalyses the reaction (2R)-2,3-dihydroxy-3-methylbutanoate + NADP(+) = (2S)-2-acetolactate + NADPH + H(+). It carries out the reaction (2R,3R)-2,3-dihydroxy-3-methylpentanoate + NADP(+) = (S)-2-ethyl-2-hydroxy-3-oxobutanoate + NADPH + H(+). It functions in the pathway amino-acid biosynthesis; L-isoleucine biosynthesis; L-isoleucine from 2-oxobutanoate: step 2/4. The protein operates within amino-acid biosynthesis; L-valine biosynthesis; L-valine from pyruvate: step 2/4. Functionally, involved in the biosynthesis of branched-chain amino acids (BCAA). Catalyzes an alkyl-migration followed by a ketol-acid reduction of (S)-2-acetolactate (S2AL) to yield (R)-2,3-dihydroxy-isovalerate. In the isomerase reaction, S2AL is rearranged via a Mg-dependent methyl migration to produce 3-hydroxy-3-methyl-2-ketobutyrate (HMKB). In the reductase reaction, this 2-ketoacid undergoes a metal-dependent reduction by NADPH to yield (R)-2,3-dihydroxy-isovalerate. This is Ketol-acid reductoisomerase (NADP(+)) from Prochlorococcus marinus (strain NATL2A).